The sequence spans 339 residues: Erlin-2 (339 aa).

At 1-3 (MAQ) the chain is on the cytoplasmic side. A helical transmembrane segment spans residues 4-24 (LGAVVAVASSFFCASLFSAVH). The Extracellular segment spans residues 25 to 339 (KIEEGHIGVY…EPLETATKDN (315 aa)). A glycan (N-linked (GlcNAc...) asparagine) is linked at Asn106. Residues 177 to 309 (EAIRRNYELM…DIPNMFMDSA (133 aa)) form an interaction with ERLIN1 region. Lys267 carries the N6-acetyllysine modification.

It belongs to the band 7/mec-2 family. Forms a heteromeric complex with ERLIN1. In complex with ERLIN1, interacts with RNF170. Interacts with activated ITPR1, independently of the degree of ITPR1 polyubiquitination. Interacts with SCAP, INSIG1, SREBF1 and SREBF2 under cholesterol sufficiency conditions; indicative for an association with the SCAP-SREBP-INSIG complex. Probably part of an AMFR/gp78 and INSIG1-containing ubiquitin ligase complex involved in ERAD of HMGCR. Interacts with TMUB1; TMUB1 bridges the association with AMFR. Interacts with SYVN1 and RNF139. Interacts with TMEM259. Interacts with TMEM41B. Deubiquitinated by USP25; leading to stabilization.

Its subcellular location is the endoplasmic reticulum membrane. Functionally, component of the ERLIN1/ERLIN2 complex which mediates the endoplasmic reticulum-associated degradation (ERAD) of inositol 1,4,5-trisphosphate receptors (IP3Rs) such as ITPR1. Promotes sterol-accelerated ERAD of HMGCR probably implicating an AMFR/gp78-containing ubiquitin ligase complex. Involved in regulation of cellular cholesterol homeostasis by regulation the SREBP signaling pathway. May promote ER retention of the SCAP-SREBF complex. In Rattus norvegicus (Rat), this protein is Erlin-2.